The primary structure comprises 309 residues: Ankyrin repeat protein VACWR203 (309 aa).

ANK repeat units lie at residues 13–44, 110–142, 160–189, 197–231, and 269–298; these read SVFKGFSDKVRKNDLDMNVVKELLSNGASLTI, KYGTPLHILASNKKLITPNYMKLLVYNGNDINA, FVYHNIEYGIRYYNEKIIDAFIELGADLTI, PVVYCIHSNAEYGYNNITNIKIIRKLLNLSRRASH, and EGRTPLHCAIQHNFTQIAKYLLDRGADIVV.

It belongs to the orthopoxviruses VACWR203 protein family.

This Bos taurus (Bovine) protein is Ankyrin repeat protein VACWR203.